A 238-amino-acid polypeptide reads, in one-letter code: Putative pectate lyase X (238 aa).

The first 22 residues, 1–22 (MKYLLPTAAAGLLLLAAQPAMA), serve as a signal peptide directing secretion. Residues Asp153, Glu188, and Asp192 each contribute to the Ca(2+) site.

The protein belongs to the polysaccharide lyase 1 family. It depends on Ca(2+) as a cofactor.

It catalyses the reaction Eliminative cleavage of (1-&gt;4)-alpha-D-galacturonan to give oligosaccharides with 4-deoxy-alpha-D-galact-4-enuronosyl groups at their non-reducing ends.. It functions in the pathway glycan metabolism; pectin degradation; 2-dehydro-3-deoxy-D-gluconate from pectin: step 2/5. In terms of biological role, involved in maceration and soft-rotting of plant tissue. This is Putative pectate lyase X (PEL X) from Pectobacterium carotovorum (Erwinia carotovora).